Here is a 364-residue protein sequence, read N- to C-terminus: 4-hydroxythreonine-4-phosphate dehydrogenase (364 aa).

Substrate is bound by residues H148 and T149. Residues H177, H216, and H301 each contribute to the a divalent metal cation site. Substrate contacts are provided by K309, N318, and R327.

It belongs to the PdxA family. In terms of assembly, homodimer. It depends on Zn(2+) as a cofactor. Mg(2+) is required as a cofactor. Co(2+) serves as cofactor.

It is found in the cytoplasm. The catalysed reaction is 4-(phosphooxy)-L-threonine + NAD(+) = 3-amino-2-oxopropyl phosphate + CO2 + NADH. It participates in cofactor biosynthesis; pyridoxine 5'-phosphate biosynthesis; pyridoxine 5'-phosphate from D-erythrose 4-phosphate: step 4/5. In terms of biological role, catalyzes the NAD(P)-dependent oxidation of 4-(phosphooxy)-L-threonine (HTP) into 2-amino-3-oxo-4-(phosphooxy)butyric acid which spontaneously decarboxylates to form 3-amino-2-oxopropyl phosphate (AHAP). The polypeptide is 4-hydroxythreonine-4-phosphate dehydrogenase (Campylobacter jejuni subsp. jejuni serotype O:23/36 (strain 81-176)).